The sequence spans 343 residues: Palmitoyltransferase ZDHHC4 (343 aa).

The Lumenal segment spans residues 1 to 2; sequence MD. Residues 3 to 23 form a helical membrane-spanning segment; that stretch reads FLVLFSFYLAFLLICVIMICI. Residues 24 to 67 are Cytoplasmic-facing; the sequence is FTKSQRLKAVVLGGAQVCARVTPQCFQRAVQTLLHQLFHTRHPA. Residues 68–88 form a helical membrane-spanning segment; the sequence is FLALHLLLQGLVYAEYTYEVF. The Lumenal segment spans residues 89–95; the sequence is SYCRELE. Residues 96–116 traverse the membrane as a helical segment; it reads FSLPCLLLPYVLLSVNLVFFT. The Cytoplasmic segment spans residues 117 to 193; sequence LTCSTNPGTI…NCIGAWNTGY (77 aa). The DHHC domain maps to 149–199; sequence SRCSTCDLRKPARSKHCRVCDRCVHRFDHHCVWVNNCIGAWNTGYFLIYLL. The active-site S-palmitoyl cysteine intermediate is the C179. A helical membrane pass occupies residues 194-214; it reads FLIYLLTLTASAATIAILSAA. The Lumenal segment spans residues 215-255; sequence FLLRLVAVSNLYQETYLDDLGRFQAVDTGFLIQHLFLAFPR. The chain crosses the membrane as a helical span at residues 256-276; the sequence is IIFLLGFVIVLSLLLAGYLCF. Topologically, residues 277–343 are cytoplasmic; sequence ALYLAATNQT…ATPSYKKKKR (67 aa). Residues 340–343 carry the Di-lysine motif motif; that stretch reads KKKR.

It belongs to the DHHC palmitoyltransferase family. As to quaternary structure, interacts with CPT1A.

The protein resides in the endoplasmic reticulum membrane. It is found in the golgi apparatus membrane. Its subcellular location is the cell membrane. The enzyme catalyses L-cysteinyl-[protein] + hexadecanoyl-CoA = S-hexadecanoyl-L-cysteinyl-[protein] + CoA. In terms of biological role, palmitoyltransferase that could catalyze the addition of palmitate onto protein substrates including the D(2) dopamine receptor DRD2, GSK3B or MAVS. Mediates GSK3B palmitoylation to prevent its AKT1-mediated phosphorylation leading to activation of the STAT3 signaling pathway. Also catalyzes MAVS palmitoylation which promotes its stabilization and activation by inhibiting 'Lys-48'- but facilitating 'Lys-63'-linked ubiquitination. In Rattus norvegicus (Rat), this protein is Palmitoyltransferase ZDHHC4.